Here is a 229-residue protein sequence, read N- to C-terminus: uncharacterized protein (229 aa).

7 helical membrane-spanning segments follow: residues 1–21 (MFGT…GGIF), 32–52 (ILMQ…ITQH), 58–78 (YPIL…IINL), 100–120 (TAVL…EAAL), 139–159 (IVLA…LFSW), 178–198 (LINE…LSIL), and 206–226 (LNLL…HAFG).

The protein localises to the cell membrane. This is an uncharacterized protein from Bacillus subtilis (strain 168).